Consider the following 116-residue polypeptide: MNVIDQLEREQMRMDIPAFRPGDTIKVHLRIIEGEKERIQVFQGAVLRLRKGGVDSTFTVRKVSDGVGVERVFPMHSPFIERIEVVAQGKVRRSRLYYLRALRGKAARIKTRTAWD.

Belongs to the bacterial ribosomal protein bL19 family.

This protein is located at the 30S-50S ribosomal subunit interface and may play a role in the structure and function of the aminoacyl-tRNA binding site. The chain is Large ribosomal subunit protein bL19 from Solidesulfovibrio magneticus (strain ATCC 700980 / DSM 13731 / RS-1) (Desulfovibrio magneticus).